A 297-amino-acid chain; its full sequence is MTRLQQRLEEALANLPDALRTSLTPIINTEFKGVISKEQFQSLQADSQLSDKELRLALLPLAAAFSVAPISNFYVGAIARGLTGNLYFGANMEYNDVQLGQTIHAEQSAISHAWIQGETGISNITINFSPCGHCRQFMNELTTADSLMVQLPERNEKSLQEYLPESFGPKDLGIEGGLLAPLSHNLALETESPLLRKALEAANRSHAPYSHNLSGIALEMESGEVYYGMYAENAAFNPSLPPLQVALVHANMSREDILTVKSAALVEDHKGAISHLAITQSTLEALNPDVTLEYASL.

CMP/dCMP-type deaminase domains follow at residues Ser50–Lys170 and Glu189–Leu297. A substrate-binding site is contributed by Asn91–Glu93. Zn(2+) is bound at residue His104. Glu106 acts as the Proton donor in catalysis. Zn(2+) contacts are provided by Cys131 and Cys134.

This sequence belongs to the cytidine and deoxycytidylate deaminase family. As to quaternary structure, homodimer. The cofactor is Zn(2+).

The enzyme catalyses cytidine + H2O + H(+) = uridine + NH4(+). It carries out the reaction 2'-deoxycytidine + H2O + H(+) = 2'-deoxyuridine + NH4(+). Its function is as follows. This enzyme scavenges exogenous and endogenous cytidine and 2'-deoxycytidine for UMP synthesis. The protein is Cytidine deaminase of Aliivibrio fischeri (strain ATCC 700601 / ES114) (Vibrio fischeri).